The chain runs to 412 residues: tRNA N6-adenosine threonylcarbamoyltransferase, mitochondrial (412 aa).

The transit peptide at 1–78 (MLCLVYNSIL…IICLNTHRTI (78 aa)) directs the protein to the mitochondrion. A divalent metal cation is bound by residues His-157 and His-161. Substrate-binding positions include 179-183 (LVSGG), Asp-212, Ala-228, Glu-232, 328-329 (RN), and Ser-363. Asp-364 serves as a coordination point for a divalent metal cation.

It belongs to the KAE1 / TsaD family. In terms of assembly, homodimer. The cofactor is a divalent metal cation.

The protein localises to the mitochondrion. The enzyme catalyses L-threonylcarbamoyladenylate + adenosine(37) in tRNA = N(6)-L-threonylcarbamoyladenosine(37) in tRNA + AMP + H(+). Functionally, required for the formation of a threonylcarbamoyl group on adenosine at position 37 (t(6)A37) in mitochondrial tRNAs that read codons beginning with adenine. Probably involved in the transfer of the threonylcarbamoyl moiety of threonylcarbamoyl-AMP (TC-AMP) to the N6 group of A37. Involved in mitochondrial genome maintenance. This Schizosaccharomyces pombe (strain 972 / ATCC 24843) (Fission yeast) protein is tRNA N6-adenosine threonylcarbamoyltransferase, mitochondrial (pgp1).